Reading from the N-terminus, the 384-residue chain is S-adenosylmethionine synthase (384 aa).

His-15 lines the ATP pocket. Asp-17 contacts Mg(2+). A K(+)-binding site is contributed by Glu-43. L-methionine-binding residues include Glu-56 and Gln-99. The segment at Gln-99–Arg-109 is flexible loop. ATP is bound by residues Asp-164 to Lys-166, Arg-231 to Phe-232, Asp-240, Arg-246 to Lys-247, Ala-263, and Lys-267. Asp-240 contacts L-methionine. Residue Lys-271 coordinates L-methionine.

Belongs to the AdoMet synthase family. As to quaternary structure, homotetramer; dimer of dimers. It depends on Mg(2+) as a cofactor. K(+) is required as a cofactor.

The protein resides in the cytoplasm. The catalysed reaction is L-methionine + ATP + H2O = S-adenosyl-L-methionine + phosphate + diphosphate. It participates in amino-acid biosynthesis; S-adenosyl-L-methionine biosynthesis; S-adenosyl-L-methionine from L-methionine: step 1/1. Functionally, catalyzes the formation of S-adenosylmethionine (AdoMet) from methionine and ATP. The overall synthetic reaction is composed of two sequential steps, AdoMet formation and the subsequent tripolyphosphate hydrolysis which occurs prior to release of AdoMet from the enzyme. In Shewanella halifaxensis (strain HAW-EB4), this protein is S-adenosylmethionine synthase.